The chain runs to 381 residues: Subtilisin J (381 aa).

Positions 1–29 (MRSKKLWISLLFALTLIFTMAFSNMSVQA) are cleaved as a signal peptide. Residues 30–106 (AGKSSTEKKY…VEEDHIAHEY (77 aa)) constitute a propeptide that is removed on maturation. Positions 38–103 (KYIVGFKQTM…VAYVEEDHIA (66 aa)) constitute an Inhibitor I9 domain. A Ca(2+)-binding site is contributed by Gln-108. In terms of domain architecture, Peptidase S8 spans 111 to 380 (PYGISQIKAP…KGLINVQAAA (270 aa)). Asp-138 serves as the catalytic Charge relay system. Asp-147 contributes to the Ca(2+) binding site. His-170 (charge relay system) is an active-site residue. Residues Leu-181, Asn-183, Ile-185, Val-187, Ala-275, Tyr-277, and Thr-280 each coordinate Ca(2+). The Charge relay system role is filled by Ser-327.

Belongs to the peptidase S8 family. It depends on Ca(2+) as a cofactor.

It is found in the secreted. It catalyses the reaction Hydrolysis of proteins with broad specificity for peptide bonds, and a preference for a large uncharged residue in P1. Hydrolyzes peptide amides.. Subtilisin is an extracellular alkaline serine protease, it catalyzes the hydrolysis of proteins and peptide amides. The sequence is that of Subtilisin J (aprJ) from Geobacillus stearothermophilus (Bacillus stearothermophilus).